A 373-amino-acid polypeptide reads, in one-letter code: Probable quinol oxidase subunit 2 (373 aa).

A signal peptide spans 1 to 19 (MSKFKSLLLLFGSLILLSG). The N-palmitoyl cysteine moiety is linked to residue cysteine 20. Cysteine 20 carries S-diacylglycerol cysteine lipidation. The next 2 helical transmembrane spans lie at 38–58 (FLIM…LILF) and 82–102 (LETI…IPTV). Composition is skewed to basic and acidic residues over residues 292–320 (EERT…ERHG) and 339–373 (EESH…GGGH). The segment at 292-373 (EERTADVLDK…KKDHENGGGH (82 aa)) is disordered.

The protein belongs to the cytochrome c oxidase subunit 2 family.

It localises to the cell membrane. The enzyme catalyses 2 a quinol + O2 = 2 a quinone + 2 H2O. Functionally, catalyzes quinol oxidation with the concomitant reduction of oxygen to water. Subunit II transfers the electrons from a quinol to the binuclear center of the catalytic subunit I. This Staphylococcus saprophyticus subsp. saprophyticus (strain ATCC 15305 / DSM 20229 / NCIMB 8711 / NCTC 7292 / S-41) protein is Probable quinol oxidase subunit 2 (qoxA).